A 727-amino-acid chain; its full sequence is MKSLGIQEIIDGASSMSLQERQREQKEIRQTFANSSESDLVGVEQSVEALAGHLVENDNIQVVSISGMGGIGKTTLARQVFHHDMVQRHFDGFAWVFVSQQFTQKHVWQRIWQELQPQNGDISHMDEHILQGKLFKLLETGRYLVVLDDVWKEEDWDRIKAVFPRKRGWKMLLTSRNEGVGIHADPKSFGFKTRILTPEESWKLCEKIVFHRRDETGTLSEVRVDEDMEAMGKEMVTCCGGLPLAVKVLGGLLATKHTVPEWKRVYDNIGPHLAGRSSLDDNLNSIYRVLSLSYENLPMCLKHCFLYLAHFPEYYEIHVKRLFNYLAAEGIITSSDDGTTIQDKGEDYLEELARRNMITIDKNYMFLRKKHCQMHDMMREVCLSKAKEENFLEIFKVSTATSAINARSLSKSRRLSVHGGNALPSLGQTINKKVRSLLYFAFEDEFCILESTTPCFRSLPLLRVLDLSRVKFEGGKLPSSIGDLIHLRFLSLHRAWISHLPSSLRNLKLLLYLNLGFNGMVHVPNVLKEMQELRYLQLPMSMHDKTKLELSDLVNLESLMNFSTKYASVMDLLHMTKLRELSLFITDGSSDTLSSSLGQLRSLEVLHLYDRQEPRVAYHGGEIVLNCIHLKELELAIHMPRFPDQYLFHPHLSHIYLWCCSMEEDPIPILERLLHLKSVILTFGAFVGRRMVCSKGGFPQLCFLKLEELEELEEWIVEEGRCHFFVL.

One can recognise an NB-ARC domain in the interval 44 to 336; the sequence is EQSVEALAGH…AAEGIITSSD (293 aa). LRR repeat units lie at residues 459 to 484, 485 to 507, 509 to 530, 575 to 600, and 601 to 626; these read LPLLRVLDLSRVKFEGGKLPSSIGDL, IHLRFLSLHRAWISHLPSSLRNL, LLLYLNLGFNGMVHVPNVLKEM, MTKLRELSLFITDGSSDTLSSSLGQL, and RSLEVLHLYDRQEPRVAYHGGEIVLN.

The protein belongs to the disease resistance NB-LRR family. RPP8/HRT subfamily.

The protein is Putative inactive disease susceptibility protein LOV1 (LOV1) of Arabidopsis thaliana (Mouse-ear cress).